The sequence spans 234 residues: 2,3,4,5-tetrahydropyridine-2,6-dicarboxylate N-acetyltransferase (234 aa).

This sequence belongs to the transferase hexapeptide repeat family. DapH subfamily.

It catalyses the reaction (S)-2,3,4,5-tetrahydrodipicolinate + acetyl-CoA + H2O = L-2-acetamido-6-oxoheptanedioate + CoA. The protein operates within amino-acid biosynthesis; L-lysine biosynthesis via DAP pathway; LL-2,6-diaminopimelate from (S)-tetrahydrodipicolinate (acetylase route): step 1/3. Functionally, catalyzes the transfer of an acetyl group from acetyl-CoA to tetrahydrodipicolinate. This Leuconostoc citreum (strain KM20) protein is 2,3,4,5-tetrahydropyridine-2,6-dicarboxylate N-acetyltransferase.